Reading from the N-terminus, the 482-residue chain is Cysteine--tRNA ligase (482 aa).

Cys-29 serves as a coordination point for Zn(2+). The short motif at 31-41 (PTVYDFAHIGN) is the 'HIGH' region element. The Zn(2+) site is built by Cys-224, His-249, and Glu-253. The 'KMSKS' region motif lies at 282 to 286 (KMSKS). Lys-285 serves as a coordination point for ATP.

This sequence belongs to the class-I aminoacyl-tRNA synthetase family. Monomer. The cofactor is Zn(2+).

It is found in the cytoplasm. The enzyme catalyses tRNA(Cys) + L-cysteine + ATP = L-cysteinyl-tRNA(Cys) + AMP + diphosphate. This is Cysteine--tRNA ligase from Nitrobacter hamburgensis (strain DSM 10229 / NCIMB 13809 / X14).